Reading from the N-terminus, the 238-residue chain is MSKSLIVALDFPGKKEVEQFLQHFEGEELFVKVGMELFYKEGPAIITYLKEKGHKIFLDLKLHDIPNTVKSAMRSLASLDVDMVNVHAAGGSSMMKAALEGLEEGKQEGKERPICIAVTQLTSTSEVMMKKEIGIEKTLEEAVAHYAKLTKESGLDGVVCSTLEVPKLREVCGDEFVTVTPGIRLASDDVNDQVRVATPKRARELGSSYIVVGRSITKAENPLEAYQTVKQQWEGVTV.

Substrate is bound by residues D10, K32, 59 to 68, T122, R184, Q193, G213, and R214; that span reads DLKLHDIPNT. K61 acts as the Proton donor in catalysis.

Belongs to the OMP decarboxylase family. Type 1 subfamily. As to quaternary structure, homodimer.

It catalyses the reaction orotidine 5'-phosphate + H(+) = UMP + CO2. Its pathway is pyrimidine metabolism; UMP biosynthesis via de novo pathway; UMP from orotate: step 2/2. Catalyzes the decarboxylation of orotidine 5'-monophosphate (OMP) to uridine 5'-monophosphate (UMP). The chain is Orotidine 5'-phosphate decarboxylase from Bacillus cytotoxicus (strain DSM 22905 / CIP 110041 / 391-98 / NVH 391-98).